A 433-amino-acid chain; its full sequence is 3-phosphoshikimate 1-carboxyvinyltransferase (433 aa).

The 3-phosphoshikimate site is built by Lys15, Ser16, and Arg20. Lys15 lines the phosphoenolpyruvate pocket. Phosphoenolpyruvate is bound by residues Gly96 and Arg124. 3-phosphoshikimate contacts are provided by Ser169, Gln171, Ser195, Asp318, and Lys345. Position 171 (Gln171) interacts with phosphoenolpyruvate. Catalysis depends on Asp318, which acts as the Proton acceptor. Arg349 and Arg393 together coordinate phosphoenolpyruvate.

This sequence belongs to the EPSP synthase family. As to quaternary structure, monomer.

The protein resides in the cytoplasm. The catalysed reaction is 3-phosphoshikimate + phosphoenolpyruvate = 5-O-(1-carboxyvinyl)-3-phosphoshikimate + phosphate. It functions in the pathway metabolic intermediate biosynthesis; chorismate biosynthesis; chorismate from D-erythrose 4-phosphate and phosphoenolpyruvate: step 6/7. Catalyzes the transfer of the enolpyruvyl moiety of phosphoenolpyruvate (PEP) to the 5-hydroxyl of shikimate-3-phosphate (S3P) to produce enolpyruvyl shikimate-3-phosphate and inorganic phosphate. This chain is 3-phosphoshikimate 1-carboxyvinyltransferase, found in Chlorobium luteolum (strain DSM 273 / BCRC 81028 / 2530) (Pelodictyon luteolum).